The primary structure comprises 278 residues: Secreted RxLR effector protein 151 (278 aa).

An N-terminal signal peptide occupies residues 1–18 (MRNRAVLFGLFFIGYSSC). The short motif at 49 to 64 (RLLQVDGPKRILAEER) is the RxLR-dEER element.

This sequence belongs to the RxLR effector family.

The protein resides in the secreted. Its subcellular location is the host endoplasmic reticulum membrane. Functionally, secreted effector that completely suppresses the host cell death induced by cell death-inducing proteins. The protein is Secreted RxLR effector protein 151 of Plasmopara viticola (Downy mildew of grapevine).